Reading from the N-terminus, the 250-residue chain is Phosphoribosylaminoimidazole-succinocarboxamide synthase (250 aa).

The protein belongs to the SAICAR synthetase family.

The enzyme catalyses 5-amino-1-(5-phospho-D-ribosyl)imidazole-4-carboxylate + L-aspartate + ATP = (2S)-2-[5-amino-1-(5-phospho-beta-D-ribosyl)imidazole-4-carboxamido]succinate + ADP + phosphate + 2 H(+). It participates in purine metabolism; IMP biosynthesis via de novo pathway; 5-amino-1-(5-phospho-D-ribosyl)imidazole-4-carboxamide from 5-amino-1-(5-phospho-D-ribosyl)imidazole-4-carboxylate: step 1/2. The protein is Phosphoribosylaminoimidazole-succinocarboxamide synthase of Bifidobacterium longum subsp. infantis (strain ATCC 15697 / DSM 20088 / JCM 1222 / NCTC 11817 / S12).